The sequence spans 156 residues: Holliday junction resolvase (156 aa).

It belongs to the RuvC family. Poxviruses-type subfamily. Mg(2+) serves as cofactor.

Nuclease that specifically cleaves and resolves four-way DNA Holliday junctions into linear duplex products. The chain is Holliday junction resolvase from Vertebrata (FPV).